The chain runs to 141 residues: Hemoglobin subunit alpha (141 aa).

One can recognise a Globin domain in the interval 1-141; sequence VLSEEDKSHV…VSAMLTSKYR (141 aa). H58 provides a ligand contact to O2. Residue H87 coordinates heme b.

The protein belongs to the globin family. Heterotetramer of two alpha chains and two beta chains. As to expression, red blood cells.

Involved in oxygen transport from the lung to the various peripheral tissues. The protein is Hemoglobin subunit alpha (HBA) of Caiman crocodilus (Spectacled caiman).